Reading from the N-terminus, the 228-residue chain is Odorant-binding protein 47 (228 aa).

Cystine bridges form between Cys60–Cys225, Cys73–Cys215, Cys74–Cys204, Cys88–Cys114, Cys110–Cys185, and Cys158–Cys195. Residue Asn117 is glycosylated (N-linked (GlcNAc...) asparagine).

The protein belongs to the PBP/GOBP family. Post-translationally, glycosylated. As to expression, head without antennae (at protein level).

It localises to the secreted. In terms of biological role, present in the aqueous fluid surrounding olfactory sensory dendrites and are thought to aid in the capture and transport of hydrophobic odorants into and through this fluid. Binds N-phenyl-1-naphthylamine, menthol, citronellal, 1-dodecanol, decanal, p-tert-butylbenzophenone, 4-hydroxy-4'-isopropylazobenzene, 2-pyrrolyl-p-methyl-azobenzene and indole. Expressed in mosquito head but barely detectable in antennae, which suggests that it may be present in mouth structures, such as palpi and proboscis, and may have a function in taste. This chain is Odorant-binding protein 47, found in Anopheles gambiae (African malaria mosquito).